A 286-amino-acid polypeptide reads, in one-letter code: uncharacterized protein (286 aa).

2 disordered regions span residues 59–89 (PESAPGKPGCAEAESAGTAAATESHGAPGAK) and 225–286 (RQRK…EDTR). The segment covering 69–85 (AEAESAGTAAATESHGA) has biased composition (low complexity).

This is an uncharacterized protein from Mus musculus (Mouse).